The chain runs to 320 residues: Ferrochelatase (320 aa).

Positions 194 and 275 each coordinate Fe cation.

The protein belongs to the ferrochelatase family. In terms of assembly, monomer.

It is found in the cytoplasm. The enzyme catalyses heme b + 2 H(+) = protoporphyrin IX + Fe(2+). The protein operates within porphyrin-containing compound metabolism; protoheme biosynthesis; protoheme from protoporphyrin-IX: step 1/1. Functionally, catalyzes the ferrous insertion into protoporphyrin IX. The sequence is that of Ferrochelatase from Escherichia coli (strain 55989 / EAEC).